Here is a 348-residue protein sequence, read N- to C-terminus: Sulfate/thiosulfate import ATP-binding protein CysA (348 aa).

Positions 3–237 (IEVRNIVKEF…PASAFVHGFI (235 aa)) constitute an ABC transporter domain. 35 to 42 (GPSGSGKT) is a binding site for ATP.

It belongs to the ABC transporter superfamily. Sulfate/tungstate importer (TC 3.A.1.6) family. As to quaternary structure, the complex is composed of two ATP-binding proteins (CysA), two transmembrane proteins (CysT and CysW) and a solute-binding protein (CysP).

The protein resides in the cell inner membrane. It carries out the reaction sulfate(out) + ATP + H2O = sulfate(in) + ADP + phosphate + H(+). The enzyme catalyses thiosulfate(out) + ATP + H2O = thiosulfate(in) + ADP + phosphate + H(+). Functionally, part of the ABC transporter complex CysAWTP involved in sulfate/thiosulfate import. Responsible for energy coupling to the transport system. In Rhodopseudomonas palustris (strain ATCC BAA-98 / CGA009), this protein is Sulfate/thiosulfate import ATP-binding protein CysA.